The following is a 130-amino-acid chain: Calcitonin gene-related peptide 2 (130 aa).

The first 26 residues, 1–26 (MDFWKFFPFLALSTIWVLCLASSLQA), serve as a signal peptide directing secretion. A propeptide spanning residues 27-82 (APFRSALESSLDLGTLGDQEKHLLLAALMQDYEQMKARKLEQEEQETKGSRVTAQK) is cleaved from the precursor. An intrachain disulfide couples Cys85 to Cys90. Phe120 bears the Phenylalanine amide mark. Residues 127-130 (DLQA) constitute a propeptide that is removed on maturation.

It belongs to the calcitonin family. As to expression, detected in nerve cells of cerebrum, hippocampus and pons/midbrain in newborns, and only in nerve cells of pons/midbrain in adult.

The protein resides in the secreted. Functionally, CALCB/CGRP2 is a peptide hormone that induces vasodilation mediated by the CALCRL-RAMP1 receptor complex. Dilates a variety of vessels including the coronary, cerebral and systemic vasculature. Its abundance in the CNS also points toward a neurotransmitter or neuromodulator role. The protein is Calcitonin gene-related peptide 2 of Mus musculus (Mouse).